The following is a 665-amino-acid chain: MSELNMELKKLRELELKTQGLAARIQTAKSGEQLDVDLVQLQIENKKLKNRLFILKKSIAEESTAAGGDVSKPKESSSITEHLESVFRQAIASAFPEFRDTPVIIAPVNSTSAKFGDYQCNNAMGLSKKLKEKGINKAPRDIATELKGHCPASPIIEKLEIAGAGFVNVFLSKDYASLALSNLLRNGVKPPEVIKKRVLVDFSSPNIAKQMHVGHLRSTIIGESLCRLLEFLQHDVIRINHLGDWGTQFGMLIAHLEDRFPNYLNESPPISDLQLFYKESKKRFDEDEEFKKRAYSRVVSLQKGVPNSIKAWELICNVSRKEFQTIYERLDISVKERGESFYQSRMLSVVEYLRGKGLLEVDEGREIMWPDDTKTGIPLTIVKSDGGFTYDTSDMAAIRHRLEEELCDWIIYVVDSGQSTHFNTIFKAAERSAILNPLSHRVDHVQFGVVLGEDGKKFKTRSGDTVKLSDLLDEGMKRSLQQLESRGRDKVLTPQELKDAQESLAYGCIKYSDLCHNRISDYIFSFDKMLEDRGNTAVYLLYTYTRICSIARNSGEDFTNLPEILKKTNIVLDHEKEWKLAKTLLKLHDILIKCSKELFLHFLCEFCFEVCTVFTEFYDSCYCIEKNKQGDIIGVNHSRILLCEATAAVLRQCFYILGLKPVSKM.

L-arginine-binding positions include 204–206 (SPN), histidine 215, tyrosine 390, aspartate 394, and glutamine 418. The 'HIGH' region motif lies at 205–216 (PNIAKQMHVGHL). The segment at 535 to 549 (NTAVYLLYTYTRICS) is interaction with tRNA.

The protein belongs to the class-I aminoacyl-tRNA synthetase family.

Its subcellular location is the cytoplasm. The protein localises to the cytosol. It carries out the reaction tRNA(Arg) + L-arginine + ATP = L-arginyl-tRNA(Arg) + AMP + diphosphate. Its function is as follows. Forms part of a macromolecular complex that catalyzes the attachment of specific amino acids to cognate tRNAs during protein synthesis. The protein is Probable arginine--tRNA ligase, cytoplasmic of Drosophila melanogaster (Fruit fly).